The following is a 238-amino-acid chain: Laccase-S (238 aa).

2 Plastocyanin-like domains span residues 4–87 (NVIA…YDPA) and 100–238 (HTII…IARY). A glycan (N-linked (GlcNAc...) asparagine) is linked at Asn8. 4 residues coordinate Cu cation: His21, His23, His66, and His68. A disulfide bridge links Cys74 with Cys162. Asn165 carries an N-linked (GlcNAc...) asparagine glycan.

It belongs to the multicopper oxidase family. In terms of assembly, monomer. Cu cation is required as a cofactor.

It localises to the secreted. The enzyme catalyses 4 hydroquinone + O2 = 4 benzosemiquinone + 2 H2O. Activity is strongly promoted by toluene. Activity is promoted by magnesium, potassium, cadmium, zinc, nickel, sodium, lead and manganese ions. Completely inhibited by IAA (cysteine protease inhibitor), PMSF (serine protease inhibitor), DEP (histidine protease inhibitor) and NAI (tyrosine protease inhibitor). Inhibited by ethanol, acetone, SDS, and EDTA. Activity is strongly inhibited by mercury ions. Also inhibited by lithium, aluminum, calcium, barium and iron ions. Functionally, lignin degradation and detoxification of lignin-derived products. Has activity towards 2,2'-azino-bis(3-ethylbenzothiazoline-6-sulfonic acid) (ABTS). The sequence is that of Laccase-S from Trametes hirsuta (White-rot fungus).